Here is a 253-residue protein sequence, read N- to C-terminus: Complement C1q subcomponent subunit B (253 aa).

The signal sequence occupies residues 1-25 (MKTQWSEILTPLLLLLLGLLHVSWA). Position 26 is a pyrrolidone carboxylic acid (Gln-26). One can recognise a Collagen-like domain in the interval 29–112 (CTGSPGIPGV…GPRGPKGGSG (84 aa)). A disordered region spans residues 29–114 (CTGSPGIPGV…RGPKGGSGDY (86 aa)). A 4-hydroxyproline mark is found at Pro-33, Pro-36, Pro-39, Pro-51, and Pro-54. 5-hydroxylysine is present on residues Lys-57 and Lys-60. A 4-hydroxyproline modification is found at Pro-63. A compositionally biased stretch (basic and acidic residues) spans 68-77 (DHGELGEKGD). 5-hydroxylysine is present on Lys-75. A compositionally biased stretch (low complexity) spans 78–96 (AGIPGIPGKVGPKGPVGPK). Pro-81 and Pro-84 each carry 4-hydroxyproline. 5-hydroxylysine is present on residues Lys-90 and Lys-96. 4-hydroxyproline is present on residues Pro-99 and Pro-102. Position 108 is a 5-hydroxylysine (Lys-108). Residues 115–253 (KATQKVAFSA…GFLLFPDMDV (139 aa)) enclose the C1q domain. Cys-179 and Cys-198 form a disulfide bridge. Ca(2+)-binding residues include Asp-199, Tyr-200, and Gln-206.

In terms of assembly, core component of the complement C1 complex, a calcium-dependent complex composed of 1 molecule of the C1Q subcomplex, 2 molecules of C1R and 2 molecules of C1S. The C1Q subcomplex is composed 18 subunits: 3 chains of C1QA, C1QB, and C1QC trimerize to form 6 collagen-like triple helices connected to six globular ligand-recognition modules (C1q domain). Hydroxylated on lysine and proline residues. Hydroxylated lysine residues can be glycosylated. Human C1Q contains up to 68.3 hydroxylysine-galactosylglucose residues and up to 2.5 hydroxylysine-galactose per molecule. Total percentage hydroxylysine residues glycosylated is 86.4%. Highest levels in spleen, lung and brain. Weaker expression in kidney and liver. In the spleen, localized mainly to the red pulp, in cells mainly of monocyte-macrophage lineage. In white pulp, localized in specific dendritic cells such as those from the periarteriolar lymphatic sheath (PALS).

It localises to the secreted. It is found in the cell surface. The C1Q subcomplex is inhibited by sulfated molecules, such as triterpenoid sulfates, heparan sulfate, or chondroitin sulfates. Functionally, core component of the complement C1 complex, a multiprotein complex that initiates the classical pathway of the complement system, a cascade of proteins that leads to phagocytosis and breakdown of pathogens and signaling that strengthens the adaptive immune system. The classical complement pathway is initiated by the C1Q subcomplex of the C1 complex, which specifically binds IgG or IgM immunoglobulins complexed with antigens, forming antigen-antibody complexes on the surface of pathogens: C1QA, together with C1QB and C1QC, specifically recognizes and binds the Fc regions of IgG or IgM via its C1q domain. Immunoglobulin-binding activates the proenzyme C1R, which cleaves C1S, initiating the proteolytic cascade of the complement system. The C1Q subcomplex is activated by a hexamer of IgG complexed with antigens, while it is activated by a pentameric IgM. The C1Q subcomplex also recognizes and binds phosphatidylserine exposed on the surface of cells undergoing programmed cell death, possibly promoting activation of the complement system. This is Complement C1q subcomponent subunit B from Rattus norvegicus (Rat).